A 149-amino-acid polypeptide reads, in one-letter code: Detocs response regulatory protein DtcB (149 aa).

The 134-residue stretch at 1–134 folds into the Response regulatory domain; sequence MILIVEDDAH…DIEACYYDHN (134 aa). 4-aspartylphosphate is present on aspartate 53.

In terms of processing, probably phosphorylated by DtcA.

Possible phosphate scavenger member of the two-component regulatory system Detocs that confers resistance to bacteriophage. When the system (DtcA-DtcB-DtcC) is expressed in a susceptible E.coli (strain MG1655) it confers resistance to bacteriophages T2, T4, T5, T6 and SECphi27. Detocs inhibits T5 infection leading to growth arrest but not complete cell lysis, during SECphi27 infection leads to cell lysis. Overexpression of this protein along with the intact Detocs locus cancels T5 immunity; when the phosphate-receiving Asp-53 is mutated to Ala in this protein, immunity is restored. DtcA probably autophosphorylates upon sensing viral infection, and subsequently transfers the phosphate signal to DtcC which activates it, leading to an antiviral defense; DtcB (this subunit) may scavenge phosphorylation signals from accidental activation of DtcA. The sequence is that of Detocs response regulatory protein DtcB from Vibrio alginolyticus.